The primary structure comprises 318 residues: Thymidylate synthase (318 aa).

Residues arginine 25 and arginine 180–arginine 181 each bind dUMP. The active-site Nucleophile is cysteine 200. DUMP contacts are provided by residues arginine 220–aspartate 223, asparagine 231, and histidine 261–tyrosine 263. (6R)-5,10-methylene-5,6,7,8-tetrahydrofolate is bound at residue aspartate 223. Residue alanine 317 coordinates (6R)-5,10-methylene-5,6,7,8-tetrahydrofolate.

It belongs to the thymidylate synthase family. Bacterial-type ThyA subfamily. In terms of assembly, homodimer.

The protein resides in the cytoplasm. It carries out the reaction dUMP + (6R)-5,10-methylene-5,6,7,8-tetrahydrofolate = 7,8-dihydrofolate + dTMP. It participates in pyrimidine metabolism; dTTP biosynthesis. Catalyzes the reductive methylation of 2'-deoxyuridine-5'-monophosphate (dUMP) to 2'-deoxythymidine-5'-monophosphate (dTMP) while utilizing 5,10-methylenetetrahydrofolate (mTHF) as the methyl donor and reductant in the reaction, yielding dihydrofolate (DHF) as a by-product. This enzymatic reaction provides an intracellular de novo source of dTMP, an essential precursor for DNA biosynthesis. This Bacillus cereus (strain ATCC 10987 / NRS 248) protein is Thymidylate synthase.